Here is a 1068-residue protein sequence, read N- to C-terminus: Sucrose-phosphate synthase (1068 aa).

2 disordered regions span residues 18–47 and 118–139; these read HTSS…GAHM and KEQE…SEGE. The segment covering 23–32 has biased composition (gly residues); it reads GAGGGGGGGD. The segment covering 118 to 128 has biased composition (basic and acidic residues); sequence KEQEQVRREAT.

The protein belongs to the glycosyltransferase 1 family. As to quaternary structure, homodimer or homotetramer.

It catalyses the reaction beta-D-fructose 6-phosphate + UDP-alpha-D-glucose = sucrose 6(F)-phosphate + UDP + H(+). It participates in glycan biosynthesis; sucrose biosynthesis; sucrose from D-fructose 6-phosphate and UDP-alpha-D-glucose: step 1/2. Activity is regulated by phosphorylation and moderated by concentration of metabolites and light. Plays a role in photosynthetic sucrose synthesis by catalyzing the rate-limiting step of sucrose biosynthesis from UDP-glucose and fructose- 6-phosphate. Involved in the regulation of carbon partitioning in the leaves of plants. May regulate the synthesis of sucrose and therefore play a major role as a limiting factor in the export of photoassimilates out of the leaf. Plays a role for sucrose availability that is essential for plant growth and fiber elongation. The sequence is that of Sucrose-phosphate synthase from Zea mays (Maize).